The following is a 127-amino-acid chain: Glycine cleavage system H protein (127 aa).

Positions 22 to 103 (EAYIGITDFA…AFANWIIKVE (82 aa)) constitute a Lipoyl-binding domain. N6-lipoyllysine is present on Lys63.

This sequence belongs to the GcvH family. As to quaternary structure, the glycine cleavage system is composed of four proteins: P, T, L and H. The cofactor is (R)-lipoate.

In terms of biological role, the glycine cleavage system catalyzes the degradation of glycine. The H protein shuttles the methylamine group of glycine from the P protein to the T protein. This chain is Glycine cleavage system H protein, found in Alkaliphilus oremlandii (strain OhILAs) (Clostridium oremlandii (strain OhILAs)).